The following is a 154-amino-acid chain: Myoglobin (154 aa).

A Globin domain is found at 2 to 148 (GLSDAEWQLV…FRNDIAAQYK (147 aa)). The residue at position 4 (S4) is a Phosphoserine. Residue H65 participates in nitrite binding. H65 contacts O2. Position 68 is a phosphothreonine (T68). H94 contributes to the heme b binding site.

The protein belongs to the globin family. As to quaternary structure, monomeric.

The protein localises to the cytoplasm. It localises to the sarcoplasm. It catalyses the reaction Fe(III)-heme b-[protein] + nitric oxide + H2O = Fe(II)-heme b-[protein] + nitrite + 2 H(+). The catalysed reaction is H2O2 + AH2 = A + 2 H2O. Monomeric heme protein which primary function is to store oxygen and facilitate its diffusion within muscle tissues. Reversibly binds oxygen through a pentacoordinated heme iron and enables its timely and efficient release as needed during periods of heightened demand. Depending on the oxidative conditions of tissues and cells, and in addition to its ability to bind oxygen, it also has a nitrite reductase activity whereby it regulates the production of bioactive nitric oxide. Under stress conditions, like hypoxia and anoxia, it also protects cells against reactive oxygen species thanks to its pseudoperoxidase activity. This Oryctolagus cuniculus (Rabbit) protein is Myoglobin (MB).